The sequence spans 312 residues: Malate dehydrogenase (312 aa).

NAD(+)-binding positions include 12-17 and Asp36; that span reads GAGFTG. 2 residues coordinate substrate: Arg87 and Arg93. NAD(+) is bound by residues Asn100 and 123–125; that span reads LTN. Residue Asn125 coordinates substrate. Ser149 is modified (phosphoserine). Arg156 lines the substrate pocket. The active-site Proton acceptor is the His180.

Belongs to the LDH/MDH superfamily. MDH type 3 family.

The catalysed reaction is (S)-malate + NAD(+) = oxaloacetate + NADH + H(+). In terms of biological role, catalyzes the reversible oxidation of malate to oxaloacetate. This chain is Malate dehydrogenase, found in Anoxybacillus flavithermus (strain DSM 21510 / WK1).